The chain runs to 304 residues: N-acetylmuramic acid 6-phosphate etherase (304 aa).

The SIS domain maps to 62 to 225 (IVEAFQQGGR…TTASMILIGK (164 aa)). The active-site Proton donor is glutamate 90. Glutamate 121 is an active-site residue.

Belongs to the GCKR-like family. MurNAc-6-P etherase subfamily. Homodimer.

The catalysed reaction is N-acetyl-D-muramate 6-phosphate + H2O = N-acetyl-D-glucosamine 6-phosphate + (R)-lactate. It participates in amino-sugar metabolism; 1,6-anhydro-N-acetylmuramate degradation. The protein operates within amino-sugar metabolism; N-acetylmuramate degradation. It functions in the pathway cell wall biogenesis; peptidoglycan recycling. Functionally, specifically catalyzes the cleavage of the D-lactyl ether substituent of MurNAc 6-phosphate, producing GlcNAc 6-phosphate and D-lactate. Together with AnmK, is also required for the utilization of anhydro-N-acetylmuramic acid (anhMurNAc) either imported from the medium or derived from its own cell wall murein, and thus plays a role in cell wall recycling. The polypeptide is N-acetylmuramic acid 6-phosphate etherase (Glaesserella parasuis serovar 5 (strain SH0165) (Haemophilus parasuis)).